Here is a 377-residue protein sequence, read N- to C-terminus: Prostaglandin reductase-3 (377 aa).

Lys35 is modified (N6-acetyllysine). Positions 185, 205, 209, 224, 247, 269, and 275 each coordinate NADP(+). A Phosphoserine modification is found at Ser299. Residues 303–305 (FFL) and Asn361 contribute to the NADP(+) site.

This sequence belongs to the zinc-containing alcohol dehydrogenase family. Quinone oxidoreductase subfamily. Widely expressed.

Its subcellular location is the peroxisome. It carries out the reaction 13,14-dihydro-15-oxo-prostaglandin E2 + NADP(+) = 15-oxoprostaglandin E2 + NADPH + H(+). The enzyme catalyses 13,14-dihydro-15-oxo-prostaglandin E1 + NADP(+) = 15-oxoprostaglandin E1 + NADPH + H(+). It catalyses the reaction 13,14-dihydro-15-oxo-PGF2alpha + NADP(+) = 15-oxoprostaglandin F2alpha + NADPH + H(+). The catalysed reaction is 13,14-dihydro-15-oxo-prostaglandin F1alpha + NADP(+) = 15-oxoprostaglandin F1alpha + NADPH + H(+). Its function is as follows. Functions as 15-oxo-prostaglandin 13-reductase and acts on 15-keto-PGE1, 15-keto-PGE2, 15-keto-PGE1-alpha and 15-keto-PGE2-alpha with highest efficiency towards 15-keto-PGE2-alpha. Overexpression represses transcriptional activity of PPARG and inhibits adipocyte differentiation. The protein is Prostaglandin reductase-3 of Mus musculus (Mouse).